Here is a 354-residue protein sequence, read N- to C-terminus: Uroporphyrinogen decarboxylase (354 aa).

Substrate is bound by residues 27–31 (RQAGR), Asp-77, Tyr-154, Thr-209, and His-327.

This sequence belongs to the uroporphyrinogen decarboxylase family. Homodimer.

It localises to the cytoplasm. It catalyses the reaction uroporphyrinogen III + 4 H(+) = coproporphyrinogen III + 4 CO2. Its pathway is porphyrin-containing compound metabolism; protoporphyrin-IX biosynthesis; coproporphyrinogen-III from 5-aminolevulinate: step 4/4. Functionally, catalyzes the decarboxylation of four acetate groups of uroporphyrinogen-III to yield coproporphyrinogen-III. The protein is Uroporphyrinogen decarboxylase of Salmonella heidelberg (strain SL476).